Consider the following 155-residue polypeptide: IFN signaling evasion protein OPG029 (155 aa).

It belongs to the orthopoxvirus OPG029 family. In terms of assembly, interacts with host TANK, TBKBP1 and AZI2; these interactions prevent interferon production. Interacts with host STAT2.

In terms of biological role, prevents establishment of cellular antiviral state by blocking virus-induced phosphorylation and activation of interferon regulatory factors 3/IRF3 and 7/IRF7, transcription factors critical for the induction of interferons alpha and beta. This blockage is produced through the inhibition of host TBK1, by binding host TBK1 adapter proteins TBKBP1 and AZI2, thereby producing a strong inhibition of the phosphorylation and activation of IRF3 and IRF7. Also acts as an inhibitor of the cellular response to type I IFN by interacting with host STAT2. Mechanistically, exerts its inhibitory effect after host ISGF3 complex (composed of STAT1, STAT2 and IRF9) binding to the interferon stimulated response element (ISRE). The chain is IFN signaling evasion protein OPG029 (OPG019) from Cynomys gunnisoni (Gunnison's prairie dog).